The chain runs to 93 residues: GWPAYPGSNGIRSSVCQKKLGCGSKNLASLGVCKAFCLGRKRFWQKCGKNGSSGKGSRICNPVLAHAVEKAGKGLIKVTDMAVAAIVKYAGKK.

Intrachain disulfides connect Cys-16/Cys-37, Cys-22/Cys-33, and Cys-47/Cys-60.

The protein belongs to the worm cytolysin family. As to expression, localized within the skin and proboscis and are most readily isolated from body mucus secretions.

It is found in the secreted. Cytolysin that shows hemolytic activity (on bovine erythrocytes, HC(50)=5.75 mg/ml). This hemolytic activity is completely inhibited by small unilamelar vesicles composed of PC/PG, PC/PI and PC/PS in 1:1 molar ratios (with at least 100 mg/ml concentration). The protein is Parbolysin P5 of Parborlasia corrugatus (Antarctic nemertean worm).